The primary structure comprises 365 residues: 3-dehydroquinate synthase (365 aa).

Residues 69–74, 103–107, 127–128, Lys-140, Lys-149, and 167–170 each bind NAD(+); these read DGEAHK, GVIGD, TT, and TLNT. Zn(2+) contacts are provided by Glu-182, His-245, and His-262.

It belongs to the sugar phosphate cyclases superfamily. Dehydroquinate synthase family. Co(2+) serves as cofactor. Zn(2+) is required as a cofactor. It depends on NAD(+) as a cofactor.

The protein localises to the cytoplasm. It catalyses the reaction 7-phospho-2-dehydro-3-deoxy-D-arabino-heptonate = 3-dehydroquinate + phosphate. Its pathway is metabolic intermediate biosynthesis; chorismate biosynthesis; chorismate from D-erythrose 4-phosphate and phosphoenolpyruvate: step 2/7. Functionally, catalyzes the conversion of 3-deoxy-D-arabino-heptulosonate 7-phosphate (DAHP) to dehydroquinate (DHQ). The sequence is that of 3-dehydroquinate synthase from Pseudomonas putida (strain W619).